We begin with the raw amino-acid sequence, 4700 residues long: StAR-related lipid transfer protein 9 (4700 aa).

Residues 3–384 (NVQVAVRVRP…LRYASSAKNI (382 aa)) form the Kinesin motor domain. An ATP-binding site is contributed by 103–110 (GQTGSGKT). The span at 310–328 (GDSGILSSPSGTSSGGAPS) shows a compositional bias: low complexity. Residues 310 to 331 (GDSGILSSPSGTSSGGAPSRRQ) are disordered. Positions 498 to 569 (LKEGTTKIGR…LTQGAVITLG (72 aa)) constitute an FHA domain. Basic and acidic residues-rich tracts occupy residues 631-646 (QCDEDHQTPRDGETSH) and 867-877 (TSEKTSSEEHL). Disordered regions lie at residues 631-652 (QCDEDHQTPRDGETSHRAQIQQ), 851-880 (WDPSTTLPPRPDPTHQTSEKTSSEEHLPQA), 1057-1104 (KKSS…SDTD), and 1128-1188 (ERKW…GFTA). Residues 1134–1146 (PEPENSESDDSQL) are compositionally biased toward acidic residues. Position 1203 is a phosphoserine (serine 1203). Disordered regions lie at residues 1939–1976 (MPGESAVSLKSRSVDRRVSSPVMVAQGGGPTPKWEGKN), 2014–2043 (ERNPSECKSQEMLNPNREPSGKKQNKRVNN), 2088–2179 (DQKE…PARD), 2254–2290 (ESQVAEHVSSSNQEEPKAQGKVEEMPMQRGGSLQEEN), 2377–2403 (GVEHQDQSTETRSHSPEGNVRGRSSEA), 2416–2444 (MGSHSQSGVPESIPLGTEDRISASTSPQD), 2479–2539 (LNKV…PRLL), 2589–2613 (RVAGRPQCKQIDQSSSDQTRNEGEA), 2642–2678 (LSADSFESLPNTETDREPWDPVQAFSHAAPAQDRKRR), 2696–2731 (SSSSEIIEKKKDATRTPSSADPLAPDSPRSSAPVEE), 2765–2789 (PQETAEGIPPGSQDSSPEHQEPRTL), 2821–2852 (VQNSTSASGPKQDHVQCPEASTGFEEGRASPK), 2892–2955 (SKHS…PCRQ), 3124–3144 (NAQVCQTNPEPPATTQGPHTL), 3199–3241 (HTCS…GLDG), 3274–3412 (SLRQ…MPST), 3564–3611 (IALG…KGSA), 3766–3790 (SDTSTVSQEEGDVPGVPQKREAEET), 3830–3884 (LPSV…RVQK), 3906–3991 (ASTQ…SPKL), 4033–4086 (PEKV…QHLS), and 4153–4193 (PGGL…EWSK). Residues 2088-2100 (DQKEQEKTDHAFR) show a composition bias toward basic and acidic residues. Positions 2103-2118 (SSGNPLPSKDQPSSPR) are enriched in polar residues. The span at 2119–2129 (QTDDTVFRDSE) shows a compositional bias: basic and acidic residues. Positions 2137 to 2148 (SIGNHPQVQKIT) are enriched in polar residues. Basic and acidic residues predominate over residues 2153-2169 (RSREGVRESEPVREHTH). Polar residues predominate over residues 2254–2266 (ESQVAEHVSSSNQ). Composition is skewed to basic and acidic residues over residues 2267–2279 (EEPKAQGKVEEMP) and 2379–2391 (EHQDQSTETRSHS). The segment covering 2500–2510 (QASKPRQKAEK) has biased composition (basic and acidic residues). Polar residues predominate over residues 2642-2653 (LSADSFESLPNT). Residues 2712-2729 (PSSADPLAPDSPRSSAPV) are compositionally biased toward low complexity. The span at 2916–2925 (APCRHPREAL) shows a compositional bias: basic and acidic residues. A compositionally biased stretch (polar residues) spans 3124 to 3141 (NAQVCQTNPEPPATTQGP). 3 stretches are compositionally biased toward polar residues: residues 3274 to 3285 (SLRQNETPQPAA), 3320 to 3339 (SSPTPQFSVVGSSRSLQELN), and 3368 to 3387 (SGKSVARTSLQAEDSNQKAS). Residues 3388-3397 (SRLDDGTTDH) are compositionally biased toward basic and acidic residues. Low complexity predominate over residues 3857-3872 (SSPSPSSPHSPGLFPS). The segment covering 3906-3924 (ASTQEPGLSPGSLTLSAPS) has biased composition (polar residues). The span at 3958-3975 (LGGSQRGRSSLQRSNGRS) shows a compositional bias: low complexity. Polar residues predominate over residues 4048-4065 (EPSQWQSRTENGGESSAS). The stretch at 4334–4387 (SDIELMLQDYQQAHEEAKVEIARARDQLRERTEQEKLRIHQKIISQLLKEEDKL) forms a coiled coil. Low complexity predominate over residues 4397–4411 (CTSSNGSLSSGMTSG). The disordered stretch occupies residues 4397 to 4419 (CTSSNGSLSSGMTSGYNSSPALS). The START domain maps to 4483-4700 (SYQDLAKHVV…IARLASFLGR (218 aa)).

Belongs to the TRAFAC class myosin-kinesin ATPase superfamily. Kinesin family. As to quaternary structure, interacts with ATAD3A. In terms of tissue distribution, expressed in the central nervous system, muscle cells (heart and skeletal muscle), pancreas, prostate and lung.

It is found in the cytoplasm. Its subcellular location is the cytoskeleton. The protein localises to the microtubule organizing center. The protein resides in the centrosome. It localises to the centriole. It is found in the nucleus. In terms of biological role, microtubule-dependent motor protein required for spindle pole assembly during mitosis. Required to stabilize the pericentriolar material (PCM). The protein is StAR-related lipid transfer protein 9 (STARD9) of Homo sapiens (Human).